The sequence spans 83 residues: Small ribosomal subunit protein bS16 (83 aa).

It belongs to the bacterial ribosomal protein bS16 family.

The sequence is that of Small ribosomal subunit protein bS16 from Shewanella putrefaciens (strain CN-32 / ATCC BAA-453).